Consider the following 445-residue polypeptide: Exodeoxyribonuclease 7 large subunit (445 aa).

Belongs to the XseA family. In terms of assembly, heterooligomer composed of large and small subunits.

Its subcellular location is the cytoplasm. It catalyses the reaction Exonucleolytic cleavage in either 5'- to 3'- or 3'- to 5'-direction to yield nucleoside 5'-phosphates.. Functionally, bidirectionally degrades single-stranded DNA into large acid-insoluble oligonucleotides, which are then degraded further into small acid-soluble oligonucleotides. This chain is Exodeoxyribonuclease 7 large subunit, found in Xanthomonas euvesicatoria pv. vesicatoria (strain 85-10) (Xanthomonas campestris pv. vesicatoria).